The primary structure comprises 107 residues: Phosphoribosyl-ATP pyrophosphatase (107 aa).

The protein belongs to the PRA-PH family.

The protein resides in the cytoplasm. The catalysed reaction is 1-(5-phospho-beta-D-ribosyl)-ATP + H2O = 1-(5-phospho-beta-D-ribosyl)-5'-AMP + diphosphate + H(+). It functions in the pathway amino-acid biosynthesis; L-histidine biosynthesis; L-histidine from 5-phospho-alpha-D-ribose 1-diphosphate: step 2/9. This Bacillus cereus (strain ATCC 14579 / DSM 31 / CCUG 7414 / JCM 2152 / NBRC 15305 / NCIMB 9373 / NCTC 2599 / NRRL B-3711) protein is Phosphoribosyl-ATP pyrophosphatase.